The primary structure comprises 344 residues: Phosphoribosylformylglycinamidine cyclo-ligase (344 aa).

This sequence belongs to the AIR synthase family.

It localises to the cytoplasm. The catalysed reaction is 2-formamido-N(1)-(5-O-phospho-beta-D-ribosyl)acetamidine + ATP = 5-amino-1-(5-phospho-beta-D-ribosyl)imidazole + ADP + phosphate + H(+). Its pathway is purine metabolism; IMP biosynthesis via de novo pathway; 5-amino-1-(5-phospho-D-ribosyl)imidazole from N(2)-formyl-N(1)-(5-phospho-D-ribosyl)glycinamide: step 2/2. The polypeptide is Phosphoribosylformylglycinamidine cyclo-ligase (Exiguobacterium sibiricum (strain DSM 17290 / CCUG 55495 / CIP 109462 / JCM 13490 / 255-15)).